Reading from the N-terminus, the 329-residue chain is Malate dehydrogenase (329 aa).

NAD(+) is bound at residue 12-18 (GAAGQIG). R95 and R101 together coordinate substrate. Residues N108, Q115, and 132 to 134 (VGN) contribute to the NAD(+) site. Substrate is bound by residues N134 and R165. Residue H190 is the Proton acceptor of the active site.

It belongs to the LDH/MDH superfamily. MDH type 2 family.

It carries out the reaction (S)-malate + NAD(+) = oxaloacetate + NADH + H(+). Functionally, catalyzes the reversible oxidation of malate to oxaloacetate. The polypeptide is Malate dehydrogenase (Ralstonia nicotianae (strain ATCC BAA-1114 / GMI1000) (Ralstonia solanacearum)).